Reading from the N-terminus, the 260-residue chain is Adenosylcobinamide-GDP ribazoletransferase (260 aa).

The next 7 membrane-spanning stretches (helical) occupy residues 31–51 (IIFFPFIGFLEGVFCIFLVNI), 55–75 (IFSSSVISIILLVFLFSVRGI), 111–131 (VIGVAGAVALVLDVLCRFAFV), 140–160 (FLIFLFMFCFSRWIVIPLMYY), 177–197 (ISSWQVIISTVLPIFLLVYFT), 202–222 (FIFLPLIALFLFFISYILKKF), and 234–254 (HLGATVEITEIVFLICFLLGE).

This sequence belongs to the CobS family. It depends on Mg(2+) as a cofactor.

The protein resides in the cell inner membrane. It catalyses the reaction alpha-ribazole + adenosylcob(III)inamide-GDP = adenosylcob(III)alamin + GMP + H(+). It carries out the reaction alpha-ribazole 5'-phosphate + adenosylcob(III)inamide-GDP = adenosylcob(III)alamin 5'-phosphate + GMP + H(+). The protein operates within cofactor biosynthesis; adenosylcobalamin biosynthesis; adenosylcobalamin from cob(II)yrinate a,c-diamide: step 7/7. Functionally, joins adenosylcobinamide-GDP and alpha-ribazole to generate adenosylcobalamin (Ado-cobalamin). Also synthesizes adenosylcobalamin 5'-phosphate from adenosylcobinamide-GDP and alpha-ribazole 5'-phosphate. This is Adenosylcobinamide-GDP ribazoletransferase from Thermodesulfovibrio yellowstonii (strain ATCC 51303 / DSM 11347 / YP87).